Reading from the N-terminus, the 346-residue chain is Syntaxin UFE1 (346 aa).

Residues 1 to 324 are Cytoplasmic-facing; that stretch reads MMSDLTPIFR…RKAKRAAGRT (324 aa). A t-SNARE coiled-coil homology domain is found at 255–317; the sequence is LNQKNEQLKK…KKGNKELRKA (63 aa). A helical; Anchor for type IV membrane protein transmembrane segment spans residues 325 to 342; that stretch reads AKMTTYGAIIMGVFILFL. Over 343-346 the chain is Lumenal; sequence DYVG.

Belongs to the syntaxin family. In terms of assembly, component of a SNARE complex consisting of UFE1, USE1, SEC20 and SEC22 or YKT6.

It is found in the endoplasmic reticulum membrane. Syntaxin required for targeting and fusion of Golgi-derived retrograde transport vesicles with the ER. This chain is Syntaxin UFE1 (UFE1), found in Saccharomyces cerevisiae (strain ATCC 204508 / S288c) (Baker's yeast).